The sequence spans 383 residues: Na(+)/H(+) antiporter NhaA (383 aa).

A run of 11 helical transmembrane segments spans residues 10-30 (LIGG…NNSP), 56-76 (LMHW…GLEI), 91-111 (IITP…IYLS), 121-141 (GWAI…ALLG), 150-170 (LLVI…IAIF), 174-194 (SLSL…IICN), 206-226 (VVLG…ATLA), 254-274 (PWII…ISFS), 289-308 (IIWG…LAVF), 327-347 (GISL…VLAF), and 355-375 (AIKI…YIVL).

The protein belongs to the NhaA Na(+)/H(+) (TC 2.A.33) antiporter family.

The protein resides in the cell inner membrane. It catalyses the reaction Na(+)(in) + 2 H(+)(out) = Na(+)(out) + 2 H(+)(in). Functionally, na(+)/H(+) antiporter that extrudes sodium in exchange for external protons. This Francisella tularensis subsp. tularensis (strain WY96-3418) protein is Na(+)/H(+) antiporter NhaA.